The chain runs to 391 residues: S-adenosylmethionine synthase (391 aa).

Histidine 16 is an ATP binding site. Aspartate 18 lines the Mg(2+) pocket. Residue glutamate 44 coordinates K(+). The L-methionine site is built by glutamate 57 and glutamine 101. The tract at residues 101 to 111 (QSADIAQGVDA) is flexible loop. Residues 166–168 (DAK), aspartate 244, 250–251 (RK), alanine 267, and lysine 271 each bind ATP. L-methionine is bound at residue aspartate 244. Lysine 275 lines the L-methionine pocket.

It belongs to the AdoMet synthase family. Homotetramer; dimer of dimers. Mg(2+) is required as a cofactor. The cofactor is K(+).

The protein resides in the cytoplasm. The enzyme catalyses L-methionine + ATP + H2O = S-adenosyl-L-methionine + phosphate + diphosphate. It participates in amino-acid biosynthesis; S-adenosyl-L-methionine biosynthesis; S-adenosyl-L-methionine from L-methionine: step 1/1. In terms of biological role, catalyzes the formation of S-adenosylmethionine (AdoMet) from methionine and ATP. The overall synthetic reaction is composed of two sequential steps, AdoMet formation and the subsequent tripolyphosphate hydrolysis which occurs prior to release of AdoMet from the enzyme. This chain is S-adenosylmethionine synthase, found in Zymomonas mobilis subsp. mobilis (strain ATCC 31821 / ZM4 / CP4).